The primary structure comprises 460 residues: Bifunctional protein GlmU (460 aa).

The tract at residues 1–229 (MTNYAIILAA…FNESLGVNDR (229 aa)) is pyrophosphorylase. Residues 8–11 (LAAG), K22, Q72, and 77–78 (GT) each bind UDP-N-acetyl-alpha-D-glucosamine. Residue D102 participates in Mg(2+) binding. UDP-N-acetyl-alpha-D-glucosamine-binding residues include G139, E154, N169, and N227. N227 serves as a coordination point for Mg(2+). A linker region spans residues 230–250 (VALATAETVMRQRITQKHMVN). Residues 251 to 460 (GVTFQNPETV…RLAHHPSRSK (210 aa)) are N-acetyltransferase. 2 residues coordinate UDP-N-acetyl-alpha-D-glucosamine: R332 and K350. H362 (proton acceptor) is an active-site residue. UDP-N-acetyl-alpha-D-glucosamine contacts are provided by Y365 and N376. Acetyl-CoA is bound by residues A379, 385–386 (NY), S404, A422, and R439.

It in the N-terminal section; belongs to the N-acetylglucosamine-1-phosphate uridyltransferase family. This sequence in the C-terminal section; belongs to the transferase hexapeptide repeat family. Homotrimer. Requires Mg(2+) as cofactor.

The protein localises to the cytoplasm. It carries out the reaction alpha-D-glucosamine 1-phosphate + acetyl-CoA = N-acetyl-alpha-D-glucosamine 1-phosphate + CoA + H(+). The catalysed reaction is N-acetyl-alpha-D-glucosamine 1-phosphate + UTP + H(+) = UDP-N-acetyl-alpha-D-glucosamine + diphosphate. Its pathway is nucleotide-sugar biosynthesis; UDP-N-acetyl-alpha-D-glucosamine biosynthesis; N-acetyl-alpha-D-glucosamine 1-phosphate from alpha-D-glucosamine 6-phosphate (route II): step 2/2. It functions in the pathway nucleotide-sugar biosynthesis; UDP-N-acetyl-alpha-D-glucosamine biosynthesis; UDP-N-acetyl-alpha-D-glucosamine from N-acetyl-alpha-D-glucosamine 1-phosphate: step 1/1. The protein operates within bacterial outer membrane biogenesis; LPS lipid A biosynthesis. Catalyzes the last two sequential reactions in the de novo biosynthetic pathway for UDP-N-acetylglucosamine (UDP-GlcNAc). The C-terminal domain catalyzes the transfer of acetyl group from acetyl coenzyme A to glucosamine-1-phosphate (GlcN-1-P) to produce N-acetylglucosamine-1-phosphate (GlcNAc-1-P), which is converted into UDP-GlcNAc by the transfer of uridine 5-monophosphate (from uridine 5-triphosphate), a reaction catalyzed by the N-terminal domain. The protein is Bifunctional protein GlmU of Streptococcus pyogenes serotype M6 (strain ATCC BAA-946 / MGAS10394).